The sequence spans 491 residues: UDP-N-acetylmuramate--L-alanine ligase (491 aa).

126–132 (GTHGKTT) provides a ligand contact to ATP.

It belongs to the MurCDEF family.

It is found in the cytoplasm. The catalysed reaction is UDP-N-acetyl-alpha-D-muramate + L-alanine + ATP = UDP-N-acetyl-alpha-D-muramoyl-L-alanine + ADP + phosphate + H(+). Its pathway is cell wall biogenesis; peptidoglycan biosynthesis. Functionally, cell wall formation. This is UDP-N-acetylmuramate--L-alanine ligase from Yersinia pestis (strain Pestoides F).